The sequence spans 668 residues: DNA ligase (668 aa).

NAD(+) is bound by residues 31–35 (DAEYD), 80–81 (SL), and glutamate 112. Lysine 114 functions as the N6-AMP-lysine intermediate in the catalytic mechanism. The NAD(+) site is built by arginine 135, glutamate 172, lysine 289, and lysine 313. The Zn(2+) site is built by cysteine 407, cysteine 410, cysteine 425, and cysteine 431. The 78-residue stretch at 591-668 (SVPQPLAGKV…NEEQLIELLN (78 aa)) folds into the BRCT domain.

The protein belongs to the NAD-dependent DNA ligase family. LigA subfamily. Mg(2+) is required as a cofactor. Mn(2+) serves as cofactor.

It catalyses the reaction NAD(+) + (deoxyribonucleotide)n-3'-hydroxyl + 5'-phospho-(deoxyribonucleotide)m = (deoxyribonucleotide)n+m + AMP + beta-nicotinamide D-nucleotide.. Functionally, DNA ligase that catalyzes the formation of phosphodiester linkages between 5'-phosphoryl and 3'-hydroxyl groups in double-stranded DNA using NAD as a coenzyme and as the energy source for the reaction. It is essential for DNA replication and repair of damaged DNA. The polypeptide is DNA ligase (Aliivibrio fischeri (strain MJ11) (Vibrio fischeri)).